The primary structure comprises 235 residues: Adenosine 5'-phosphosulfate reductase (235 aa).

[4Fe-4S] cluster contacts are provided by Cys121, Cys122, Cys204, and Cys207. Residue Cys230 is the Nucleophile; cysteine thiosulfonate intermediate of the active site.

This sequence belongs to the PAPS reductase family. CysH subfamily. [4Fe-4S] cluster is required as a cofactor.

The protein resides in the cytoplasm. It carries out the reaction [thioredoxin]-disulfide + sulfite + AMP + 2 H(+) = adenosine 5'-phosphosulfate + [thioredoxin]-dithiol. The protein operates within sulfur metabolism; hydrogen sulfide biosynthesis; sulfite from sulfate. Functionally, catalyzes the formation of sulfite from adenosine 5'-phosphosulfate (APS) using thioredoxin as an electron donor. The sequence is that of Adenosine 5'-phosphosulfate reductase from Geobacillus thermodenitrificans (strain NG80-2).